The chain runs to 487 residues: Probable cobyric acid synthase (487 aa).

Residues 246-431 (LVRIAVIRLP…LHGLFMVPAA (186 aa)) enclose the GATase cobBQ-type domain. The Nucleophile role is filled by Cys325. The active site involves His423.

Belongs to the CobB/CobQ family. CobQ subfamily.

Its pathway is cofactor biosynthesis; adenosylcobalamin biosynthesis. In terms of biological role, catalyzes amidations at positions B, D, E, and G on adenosylcobyrinic A,C-diamide. NH(2) groups are provided by glutamine, and one molecule of ATP is hydrogenolyzed for each amidation. In Methanosphaerula palustris (strain ATCC BAA-1556 / DSM 19958 / E1-9c), this protein is Probable cobyric acid synthase.